A 132-amino-acid chain; its full sequence is Large ribosomal subunit protein uL14 (132 aa).

This sequence belongs to the universal ribosomal protein uL14 family. Part of the 50S ribosomal subunit. Forms a cluster with proteins L3 and L24e, part of which may contact the 16S rRNA in 2 intersubunit bridges.

Its function is as follows. Binds to 23S rRNA. Forms part of two intersubunit bridges in the 70S ribosome. In Methanothrix thermoacetophila (strain DSM 6194 / JCM 14653 / NBRC 101360 / PT) (Methanosaeta thermophila), this protein is Large ribosomal subunit protein uL14.